A 60-amino-acid chain; its full sequence is Large ribosomal subunit protein bL32 (60 aa).

This sequence belongs to the bacterial ribosomal protein bL32 family.

The sequence is that of Large ribosomal subunit protein bL32 from Synechococcus sp. (strain JA-3-3Ab) (Cyanobacteria bacterium Yellowstone A-Prime).